Consider the following 342-residue polypeptide: tRNA N6-adenosine threonylcarbamoyltransferase (342 aa).

Residues histidine 115 and histidine 119 each coordinate Fe cation. Substrate contacts are provided by residues 138–142, aspartate 171, glycine 184, and asparagine 276; that span reads LVSGG. Residue aspartate 304 coordinates Fe cation.

Belongs to the KAE1 / TsaD family. Requires Fe(2+) as cofactor.

It localises to the cytoplasm. The enzyme catalyses L-threonylcarbamoyladenylate + adenosine(37) in tRNA = N(6)-L-threonylcarbamoyladenosine(37) in tRNA + AMP + H(+). Its function is as follows. Required for the formation of a threonylcarbamoyl group on adenosine at position 37 (t(6)A37) in tRNAs that read codons beginning with adenine. Is involved in the transfer of the threonylcarbamoyl moiety of threonylcarbamoyl-AMP (TC-AMP) to the N6 group of A37, together with TsaE and TsaB. TsaD likely plays a direct catalytic role in this reaction. This Dichelobacter nodosus (strain VCS1703A) protein is tRNA N6-adenosine threonylcarbamoyltransferase.